We begin with the raw amino-acid sequence, 103 residues long: Small ribosomal subunit protein uS10 (103 aa).

Belongs to the universal ribosomal protein uS10 family. In terms of assembly, part of the 30S ribosomal subunit.

Functionally, involved in the binding of tRNA to the ribosomes. This is Small ribosomal subunit protein uS10 from Acinetobacter baylyi (strain ATCC 33305 / BD413 / ADP1).